A 1916-amino-acid chain; its full sequence is Endoribonuclease Dicer (1916 aa).

The 177-residue stretch at 51–227 folds into the Helicase ATP-binding domain; the sequence is LLEAALDHNT…ELEEKIQKLE (177 aa). 64–71 is a binding site for ATP; it reads LNTGSGKT. The DECH box motif lies at 175–178; sequence DECH. Positions 256–595 are required for interaction with PRKRA and TARBP2; it reads DCGPFTDRSG…LRNKCSKSAD (340 aa). The interval 409-433 is disordered; the sequence is YVSWSDSEDDDDDEEIEEKEKPETN. Serine 413 and serine 415 each carry phosphoserine. Residues 414 to 425 show a composition bias toward acidic residues; the sequence is DSEDDDDDEEIE. The 170-residue stretch at 433–602 folds into the Helicase C-terminal domain; it reads NFPSPFTNIL…SADGAEADVH (170 aa). One can recognise a Dicer dsRNA-binding fold domain in the interval 630-722; sequence AIGHINRYCA…MPVGKETVKY (93 aa). The tract at residues 726 to 745 is disordered; the sequence is LDLHDEEETSVPGRPGSTKR. The 148-residue stretch at 895–1042 folds into the PAZ domain; the sequence is KFMEDIEKSE…LVPELCAIHP (148 aa). 2 positions are modified to phosphoserine: serine 1016 and serine 1160. One can recognise an RNase III 1 domain in the interval 1276 to 1403; the sequence is DSEQSPSVGY…SEKWEKDEMT (128 aa). Residues glutamate 1316, glutamate 1395, and glutamate 1398 each contribute to the Mg(2+) site. Phosphoserine occurs at positions 1456, 1464, and 1466. Residues 1598–1626 are disordered; sequence ALDPAQENGSSQQKSLSGSCAAPVGPRSS. Over residues 1604-1615 the composition is skewed to polar residues; that stretch reads ENGSSQQKSLSG. The 159-residue stretch at 1660–1818 folds into the RNase III 2 domain; the sequence is FETFEKKINY…LAGAIYMDSG (159 aa). Mg(2+) contacts are provided by glutamate 1699, aspartate 1804, and glutamate 1807. The DRBM domain occupies 1843–1908; that stretch reads VPRSPVRELL…ARRALRSLKA (66 aa). Phosphoserine is present on serine 1862.

It belongs to the helicase family. Dicer subfamily. In terms of assembly, component of the RISC loading complex (RLC), or micro-RNA (miRNA) loading complex (miRLC), which is composed of DICER1, AGO2 and TARBP2; DICER1 and TARBP2 are required to process precursor miRNAs (pre-miRNAs) to mature miRNAs and then load them onto AGO2. Note that the trimeric RLC/miRLC is also referred to as RISC. Interacts with DHX9, AGO1, PIWIL1 and PRKRA. Interacts with AGO2, TARBP2, EIF6, MOV10 and RPL7A (60S ribosome subunit); they form a large RNA-induced silencing complex (RISC). Interacts with BCDIN3D. Interacts (via Dicer dsRNA-binding fold domain) with ALOX5 (via PLAT domain); this interaction enhances arachidonate 5-lipoxygenase activity and modifies the miRNA precursor processing activity of DICER1. It depends on Mg(2+) as a cofactor. The cofactor is Mn(2+). In terms of tissue distribution, isoform 1 is expressed in a wide variety of tissues. Isoform 2 is specifically expressed in oocytes during their growth (at protein level).

Its subcellular location is the cytoplasm. It carries out the reaction Endonucleolytic cleavage to 5'-phosphomonoester.. Double-stranded RNA (dsRNA) endoribonuclease playing a central role in short dsRNA-mediated post-transcriptional gene silencing. Cleaves naturally occurring long dsRNAs and short hairpin pre-microRNAs (miRNA) into fragments of twenty-one to twenty-three nucleotides with 3' overhang of two nucleotides, producing respectively short interfering RNAs (siRNA) and mature microRNAs. SiRNAs and miRNAs serve as guide to direct the RNA-induced silencing complex (RISC) to complementary RNAs to degrade them or prevent their translation. Gene silencing mediated by siRNAs, also called RNA interference, controls the elimination of transcripts from mobile and repetitive DNA elements of the genome but also the degradation of exogenous RNA of viral origin for instance. The miRNA pathway on the other side is a mean to specifically regulate the expression of target genes. Its function is as follows. More active than isoform 1 to process long double-stranded RNA into siRNAs. Responsible for the accumulation of endogenous siRNAs observed in mouse oocytes compared to somatic cells and it regulates meiotic spindle organization in female germline. The polypeptide is Endoribonuclease Dicer (Dicer1) (Mus musculus (Mouse)).